The sequence spans 59 residues: Early growth response protein 1 (59 aa).

3 C2H2-type zinc fingers span residues 1–18 (CDRRFSRSDELTRHIRIH), 24–46 (FQCRICMRNFSRSDHLTTHIRTH), and 52–59 (FACDICGR).

This sequence belongs to the EGR C2H2-type zinc-finger protein family.

The protein localises to the nucleus. The protein resides in the cytoplasm. In terms of biological role, transcriptional regulator. Recognizes and binds to the DNA sequence 5'-GCG(T/G)GGGCG-3'(EGR-site) in the promoter region of target genes. Binds double-stranded target DNA, irrespective of the cytosine methylation status. Regulates the transcription of numerous target genes, and thereby plays an important role in regulating the response to growth factors, DNA damage, and ischemia. Plays a role in the regulation of cell survival, proliferation and cell death. Mediates responses to ischemia and hypoxia; regulates the expression of proteins that are involved in inflammatory processes. Plays a role in regulating the expression of circadian clock genes. The protein is Early growth response protein 1 (EGR1) of Serinus canaria (Island canary).